Consider the following 2035-residue polypeptide: Ral GTPase-activating protein subunit alpha-1 (2035 aa).

Residues 343–384 (LVSREESKNDTVDKADKTAEPEQSHSNTSTLTEREPSSSSLC) form a disordered region. Over residues 345-365 (SREESKNDTVDKADKTAEPEQ) the composition is skewed to basic and acidic residues. Polar residues predominate over residues 366 to 384 (SHSNTSTLTEREPSSSSLC). Ser-710 and Ser-720 each carry phosphoserine. The segment at 714 to 754 (SFSRGWSRDQPGQAPMRQRSATTTGSPGTEKARSIVRQKTV) is disordered. Phosphothreonine is present on Thr-753. Residue Ser-772 is modified to Phosphoserine. Residue Thr-777 is modified to Phosphothreonine. The residue at position 796 (Ser-796) is a Phosphoserine. Positions 807–817 (ERAKVNKEDTS) are enriched in basic and acidic residues. 2 disordered regions span residues 807–834 (ERAK…SANV) and 848–911 (SGNA…SHSD). Polar residues-rich tracts occupy residues 824-833 (NSETGGSSAN) and 849-862 (GNAS…SSPG). Phosphoserine is present on residues Ser-859, Ser-860, and Ser-863. Positions 894-911 (SPASAGSSDLMSSDSHSD) are enriched in low complexity. Residues Ser-985, Ser-989, Ser-993, and Ser-999 each carry the phosphoserine modification. Positions 986-1008 (ESASPVHSALGSRSQTPSPSTLN) are disordered. Thr-1001 carries the phosphothreonine modification. Phosphoserine occurs at positions 1003 and 1477. A minimal domain that binds to TCF3/E12 region spans residues 1326–2034 (FTNKTVAHVA…PYHHFPADAD (709 aa)). Residues 1713–1746 (SEKQENDVINAILKQYTEEKEFVEKHFNDLNMKA) are a coiled coil. In terms of domain architecture, Rap-GAP spans 1795–2003 (LRNLDSRQCR…EERARYLQTI (209 aa)).

Component of the heterodimeric RalGAP1 complex with RALGAPB. Heterodimerization is required for activity. Interacts with the HLH region of TCF3/isoform E12. In terms of tissue distribution, highly expressed in brain, thymus and testis with lower levels in lung and spleen and barely detectable in heart or liver (at protein level).

The protein resides in the cytoplasm. The protein localises to the nucleus. Catalytic subunit of the heterodimeric RalGAP1 complex which acts as a GTPase activator for the Ras-like small GTPases RALA and RALB. The chain is Ral GTPase-activating protein subunit alpha-1 (Ralgapa1) from Rattus norvegicus (Rat).